A 553-amino-acid polypeptide reads, in one-letter code: Arylsulfatase K (553 aa).

A signal peptide spans 1–16 (MLLLLVSVVAALALAA). Ca(2+)-binding residues include Asp40 and Cys80. Cys80 acts as the Nucleophile in catalysis. The residue at position 80 (Cys80) is a 3-oxoalanine (Cys). Asn108 is a glycosylation site (N-linked (GlcNAc...) asparagine). A substrate-binding site is contributed by Lys128. N-linked (GlcNAc...) asparagine glycosylation is present at Asn191. Position 249 (His249) interacts with substrate. Residue Asn260 is glycosylated (N-linked (GlcNAc...) asparagine). 2 residues coordinate Ca(2+): Asp311 and His312. N-linked (GlcNAc...) asparagine glycans are attached at residues Asn373, Asn411, and Asn496. The segment at 530–553 (SPLASSPTQSTSGSQPTLPQSTSG) is disordered. Low complexity predominate over residues 534–553 (SSPTQSTSGSQPTLPQSTSG).

Belongs to the sulfatase family. Ca(2+) is required as a cofactor. In terms of processing, the conversion to 3-oxoalanine (also known as C-formylglycine, FGly), of a serine or cysteine residue in prokaryotes and of a cysteine residue in eukaryotes, is critical for catalytic activity. The 75-kDa precursor undergoes proteolytic processing to yield a 23 kDa form. Post-translationally, N-glycosylated with both high mannose and complex type sugars.

It is found in the secreted. The protein resides in the lysosome. The enzyme catalyses an aryl sulfate + H2O = a phenol + sulfate + H(+). It catalyses the reaction Hydrolysis of the 2-sulfate groups of the 2-O-sulfo-D-glucuronate residues of chondroitin sulfate, heparin and heparitin sulfate.. In terms of biological role, catalyzes the hydrolysis of pseudosubstrates such as p-nitrocatechol sulfate and p-nitrophenyl sulfate. Catalyzes the hydrolysis of the 2-sulfate groups of the 2-O-sulfo-D-glucuronate residues of chondroitin sulfate, heparin and heparitin sulfate. Acts selectively on 2-sulfoglucuronate and lacks activity against 2-sulfoiduronate. This Mus musculus (Mouse) protein is Arylsulfatase K (Arsk).